A 620-amino-acid chain; its full sequence is Translocator protein BipB (620 aa).

Residues 58–95 (QCDAQPAAHDARLDDKPALRAPQERDAPPLGASDTGSR) are disordered. Over residues 66–84 (HDARLDDKPALRAPQERDA) the composition is skewed to basic and acidic residues. A coiled-coil region spans residues 309–339 (EMQAKREAELQKKSDEYQAQVKKAEEMQKTM). 3 consecutive transmembrane segments (helical) span residues 355–375 (FAAAAFTGGASLALAAVGLAL), 401–421 (AILKPLMEMISSLITKALVAC), and 430–450 (LAGAILGAVVTGVALVAAAFV).

This sequence belongs to the SctE/SipB/YopB family.

It localises to the secreted. Its subcellular location is the host membrane. Functionally, plays a role in the bacterium-induced formation of multinucleated giant cell (MNGC), which is formed after host cell fusion, as well as in the intercellular spreading of bacteria and in the induction of apoptosis in macrophages. May act in concert with other effector proteins to induce fusion of host cell membranes. The polypeptide is Translocator protein BipB (bipB) (Burkholderia pseudomallei (strain 1106a)).